The sequence spans 248 residues: MSDSKDQIYQDAKGAVGAFEFDERVAHVFTDMINRSVPGYAMMLEMIGVISRRYAQAGAHCYDLGCSLGASTLAIRSNLKHFNESDNKPKVIGVDNSAAMVERCRVNMERMPSVIPTEILCQDILSTPIENASIAVMNFTLQFIPLAQREDLLHRIAVNMKPGGAMVLSEKIEFADTDKQHTLFDLHHDFKRSRGYSDLEIAQKRSALENVLVPETIEAHIERLQRAGFSQAYLWFQCFNFVSFLAIK.

Residues Y40, 65–67, 95–96, 123–124, N138, and R205 contribute to the S-adenosyl-L-methionine site; these read GCS, DN, and DI.

It belongs to the class I-like SAM-binding methyltransferase superfamily. Cx-SAM synthase family. Homodimer.

The catalysed reaction is prephenate + S-adenosyl-L-methionine = carboxy-S-adenosyl-L-methionine + 3-phenylpyruvate + H2O. In terms of biological role, catalyzes the conversion of S-adenosyl-L-methionine (SAM) to carboxy-S-adenosyl-L-methionine (Cx-SAM). The chain is Carboxy-S-adenosyl-L-methionine synthase from Hahella chejuensis (strain KCTC 2396).